Reading from the N-terminus, the 312-residue chain is Acetaldehyde dehydrogenase (312 aa).

12–15 (SGNV) contributes to the NAD(+) binding site. Cys132 functions as the Acyl-thioester intermediate in the catalytic mechanism. NAD(+)-binding positions include 163 to 171 (SAGPGTRAN) and Asn290.

The protein belongs to the acetaldehyde dehydrogenase family.

The enzyme catalyses acetaldehyde + NAD(+) + CoA = acetyl-CoA + NADH + H(+). The sequence is that of Acetaldehyde dehydrogenase (cbzQ) from Pseudomonas putida (Arthrobacter siderocapsulatus).